We begin with the raw amino-acid sequence, 252 residues long: 5-oxoprolinase subunit A (252 aa).

It belongs to the LamB/PxpA family. As to quaternary structure, forms a complex composed of PxpA, PxpB and PxpC.

It carries out the reaction 5-oxo-L-proline + ATP + 2 H2O = L-glutamate + ADP + phosphate + H(+). In terms of biological role, catalyzes the cleavage of 5-oxoproline to form L-glutamate coupled to the hydrolysis of ATP to ADP and inorganic phosphate. In Bacillus cytotoxicus (strain DSM 22905 / CIP 110041 / 391-98 / NVH 391-98), this protein is 5-oxoprolinase subunit A.